We begin with the raw amino-acid sequence, 201 residues long: ATP-dependent Clp protease proteolytic subunit (201 aa).

Ser-97 (nucleophile) is an active-site residue. His-122 is a catalytic residue.

Belongs to the peptidase S14 family. In terms of assembly, fourteen ClpP subunits assemble into 2 heptameric rings which stack back to back to give a disk-like structure with a central cavity, resembling the structure of eukaryotic proteasomes.

It is found in the cytoplasm. The catalysed reaction is Hydrolysis of proteins to small peptides in the presence of ATP and magnesium. alpha-casein is the usual test substrate. In the absence of ATP, only oligopeptides shorter than five residues are hydrolyzed (such as succinyl-Leu-Tyr-|-NHMec, and Leu-Tyr-Leu-|-Tyr-Trp, in which cleavage of the -Tyr-|-Leu- and -Tyr-|-Trp bonds also occurs).. Its function is as follows. Cleaves peptides in various proteins in a process that requires ATP hydrolysis. Has a chymotrypsin-like activity. Plays a major role in the degradation of misfolded proteins. This chain is ATP-dependent Clp protease proteolytic subunit, found in Nitratidesulfovibrio vulgaris (strain DSM 19637 / Miyazaki F) (Desulfovibrio vulgaris).